Consider the following 142-residue polypeptide: Large ribosomal subunit protein uL13 (142 aa).

This sequence belongs to the universal ribosomal protein uL13 family. Part of the 50S ribosomal subunit.

Its function is as follows. This protein is one of the early assembly proteins of the 50S ribosomal subunit, although it is not seen to bind rRNA by itself. It is important during the early stages of 50S assembly. The sequence is that of Large ribosomal subunit protein uL13 from Idiomarina loihiensis (strain ATCC BAA-735 / DSM 15497 / L2-TR).